The sequence spans 255 residues: Cytochrome c oxidase subunit 2 (255 aa).

The Mitochondrial intermembrane portion of the chain corresponds to 1–42 (MKFFFFSFINYKVLNDAARPWQIGFQDPATPIMEGIVNLHHD). A helical transmembrane segment spans residues 43-63 (IIFFLIIIIIFVSWILFRTLF). The Mitochondrial matrix segment spans residues 64–83 (LFNSKTNPVAYNFSHGTFIE). A helical membrane pass occupies residues 84-104 (LLWTLTPSLVLIGIAVPSFAL). Topologically, residues 105–255 (LYSIDEIIDP…IRWVQNKILD (151 aa)) are mitochondrial intermembrane. Cu cation contacts are provided by His187, Cys222, Glu224, Cys226, His230, and Met233. Glu224 is a binding site for Mg(2+).

It belongs to the cytochrome c oxidase subunit 2 family. Component of the cytochrome c oxidase (complex IV, CIV), a multisubunit enzyme composed of a catalytic core of 3 subunits and several supernumerary subunits. The complex exists as a monomer or a dimer and forms supercomplexes (SCs) in the inner mitochondrial membrane with ubiquinol-cytochrome c oxidoreductase (cytochrome b-c1 complex, complex III, CIII). Requires Cu cation as cofactor.

It is found in the mitochondrion inner membrane. The catalysed reaction is 4 Fe(II)-[cytochrome c] + O2 + 8 H(+)(in) = 4 Fe(III)-[cytochrome c] + 2 H2O + 4 H(+)(out). Component of the cytochrome c oxidase, the last enzyme in the mitochondrial electron transport chain which drives oxidative phosphorylation. The respiratory chain contains 3 multisubunit complexes succinate dehydrogenase (complex II, CII), ubiquinol-cytochrome c oxidoreductase (cytochrome b-c1 complex, complex III, CIII) and cytochrome c oxidase (complex IV, CIV), that cooperate to transfer electrons derived from NADH and succinate to molecular oxygen, creating an electrochemical gradient over the inner membrane that drives transmembrane transport and the ATP synthase. Cytochrome c oxidase is the component of the respiratory chain that catalyzes the reduction of oxygen to water. Electrons originating from reduced cytochrome c in the intermembrane space (IMS) are transferred via the dinuclear copper A center (CU(A)) of subunit 2 and heme A of subunit 1 to the active site in subunit 1, a binuclear center (BNC) formed by heme A3 and copper B (CU(B)). The BNC reduces molecular oxygen to 2 water molecules using 4 electrons from cytochrome c in the IMS and 4 protons from the mitochondrial matrix. In Cyanidium caldarium (Red alga), this protein is Cytochrome c oxidase subunit 2 (COX2).